A 523-amino-acid polypeptide reads, in one-letter code: Cytokinin dehydrogenase 3 (523 aa).

The N-terminal stretch at 1–31 (MASYNLRSQVRLIAITIVIIITLSTPITTNT) is a signal peptide. The 178-residue stretch at 66-243 (TKIFPSAVLI…TRARIKLEVA (178 aa)) folds into the FAD-binding PCMH-type domain. Residues Ala-100, Gly-102, and Gly-104 each contribute to the FAD site. The residue at position 105 (His-105) is a Pros-8alpha-FAD histidine. Positions 106 and 110 each coordinate FAD. N-linked (GlcNAc...) asparagine glycosylation occurs at Asn-153. FAD-binding residues include Asp-167, Thr-172, Ser-178, Ile-182, and Ile-233. Asn-408 is a glycosylation site (N-linked (GlcNAc...) asparagine). Tyr-476, Ser-511, and Gln-514 together coordinate FAD.

It belongs to the oxygen-dependent FAD-linked oxidoreductase family. Requires FAD as cofactor. As to expression, very weak expression in the young shoot tissues around two weeks after germination. Present in the center of the floral meristem and the boundary between long stamen primordia and gynoecial primordia.

It is found in the endoplasmic reticulum. Its subcellular location is the vacuole. The catalysed reaction is N(6)-dimethylallyladenine + A + H2O = 3-methyl-2-butenal + adenine + AH2. Catalyzes the oxidation of cytokinins, a family of N(6)-substituted adenine derivatives that are plant hormones, where the substituent is an isopentenyl group. Catalyzes in vitro the oxidation of various types of cytokinin nucleotides that are known as direct products of cytokinin biosynthesis. In association with CKX5 regulates the activity of the reproductive meristems, flower organ size and ovule formation. This Arabidopsis thaliana (Mouse-ear cress) protein is Cytokinin dehydrogenase 3 (CKX3).